The following is a 162-amino-acid chain: ATP synthase subunit b (162 aa).

A helical membrane pass occupies residues 6 to 25 (TLFTLVTFLVLMLAVGKVAW).

The protein belongs to the ATPase B chain family. F-type ATPases have 2 components, F(1) - the catalytic core - and F(0) - the membrane proton channel. F(1) has five subunits: alpha(3), beta(3), gamma(1), delta(1), epsilon(1). F(0) has three main subunits: a(1), b(2) and c(10-14). The alpha and beta chains form an alternating ring which encloses part of the gamma chain. F(1) is attached to F(0) by a central stalk formed by the gamma and epsilon chains, while a peripheral stalk is formed by the delta and b chains.

The protein localises to the cell membrane. Functionally, f(1)F(0) ATP synthase produces ATP from ADP in the presence of a proton or sodium gradient. F-type ATPases consist of two structural domains, F(1) containing the extramembraneous catalytic core and F(0) containing the membrane proton channel, linked together by a central stalk and a peripheral stalk. During catalysis, ATP synthesis in the catalytic domain of F(1) is coupled via a rotary mechanism of the central stalk subunits to proton translocation. In terms of biological role, component of the F(0) channel, it forms part of the peripheral stalk, linking F(1) to F(0). This chain is ATP synthase subunit b, found in Lacticaseibacillus casei (strain BL23) (Lactobacillus casei).